A 220-amino-acid chain; its full sequence is Splicing factor U2AF 26 kDa subunit (220 aa).

A2 is modified (N-acetylalanine). The segment at E12–P40 adopts a C3H1-type 1 zinc-finger fold. Residues S65–V147 enclose the RRM domain. The C3H1-type 2 zinc finger occupies D149–P176. A disordered region spans residues Y186–F220. Residues G189–F220 are compositionally biased toward basic residues.

This sequence belongs to the splicing factor SR family. In terms of assembly, interacts with GFI1, U2AF2 and C1QBP.

Its subcellular location is the nucleus. It is found in the nucleus speckle. It localises to the cytoplasm. Its function is as follows. RNA-binding protein that function as a pre-mRNA splicing factor. Plays a critical role in both constitutive and enhancer-dependent splicing by mediating protein-protein interactions and protein-RNA interactions required for accurate 3'-splice site selection. Acts by enhancing the binding of U2AF2 to weak pyrimidine tracts. Also participates in the regulation of alternative pre-mRNA splicing. Activates exon 5 skipping of PTPRC during T-cell activation; an event reversed by GFI1. Binds to RNA at the AG dinucleotide at the 3'-splice site. Shows a preference for AGC or AGA. This chain is Splicing factor U2AF 26 kDa subunit (U2AF1L4), found in Bos taurus (Bovine).